The primary structure comprises 361 residues: Velvet complex subunit B (361 aa).

2 disordered regions span residues 1 to 44 (MYAI…GIPS) and 139 to 161 (SIST…TYAQ). Residues 10-26 (PPPPPPLSMDRIPPPSS) are compositionally biased toward pro residues. The Velvet domain occupies 54–340 (VHEGRIWSLQ…ALQGIKIPIR (287 aa)).

It belongs to the velvet family. VelB subfamily. Component of the heterotrimeric velvet complex composed of laeA, veA and velB; VeA acting as a bridging protein between laeA and velB. Forms a heterodimeric complex with vosA; the formation of the velB-vosA complex is light-dependent.

The protein localises to the nucleus. It is found in the cytoplasm. Component of the velvet transcription factor complex that controls sexual/asexual developmental ratio in response to light, promoting sexual development in the darkness while stimulating asexual sporulation under illumination. The velvet complex acts as a global regulator for secondary metabolite gene expression. Component of the velB-VosA heterodimeric complex that plays a dual role in activating genes associated with spore maturation and repressing certain development-associated genes. The velB-VosA complex binds DNA through the DNA-binding domain of vosA that recognizes an 11-nucleotide consensus sequence 5'-CTGGCCGCGGC-3' consisting of two motifs in the promoters of key developmental regulatory genes. Controls the expression of the aflatoxin gene cluster. Likely coordinates with fluG to modulate sclerotial production. The polypeptide is Velvet complex subunit B (Aspergillus flavus (strain ATCC 200026 / FGSC A1120 / IAM 13836 / NRRL 3357 / JCM 12722 / SRRC 167)).